A 209-amino-acid polypeptide reads, in one-letter code: uncharacterized protein (209 aa).

Its function is as follows. May influence the expression of the nuc gene. This is an uncharacterized protein from Shigella flexneri.